Reading from the N-terminus, the 270-residue chain is MLQACKMEGFPLVPPPSEDLVPYDTDLYQRQTHEYYPYLSSDGESHSDHYWDFHPHHVHSEFESFAENHFTELQSVQPPQLQQLYRHMELEQMHVLDTPMAPTHASLGHQVSYLPRMCLLYPSLSPAQPSSDEEEGERQSPPLEVSDGEADGLEPGPGLLHGETGSKKKIRLYQFLLDLLRSGDMKDSIWWVDKDKGTFQFSSKHKEALAHRWGIQKGNRKKMTYQKMARALRNYGKTGEVKKVKKKLTYQFSGEVLGRGALVVRRHPPH.

Residues 124 to 162 form a disordered region; the sequence is LSPAQPSSDEEEGERQSPPLEVSDGEADGLEPGPGLLHG. Phosphoserine is present on residues Ser140 and Ser146. Residues 153–162 are compositionally biased toward low complexity; sequence LEPGPGLLHG. Residues 170–253 constitute a DNA-binding region (ETS); it reads IRLYQFLLDL…VKKKLTYQFS (84 aa). Residues Lys217, Arg230, Arg233, and Lys243 each contribute to the DNA site.

This sequence belongs to the ETS family. In terms of assembly, binds DNA as a monomer. Can form homomers. Directly interacts with CEBPD/NF-IL6-beta; this interaction does not affect DNA-binding properties of each partner. Interacts with NONO/p54(nrb). Interacts with RUNX1/AML1. Interacts with GFI1; the interaction represses SPI1 transcriptional activity, hence blocks SPI1-induced macrophage differentiation of myeloid progenitor cells. Interacts with CEBPE. Interacts with IRF4/Pip and IRF8. Interacts with JUN. Interacts with RB1. Interacts with TBP.

It is found in the nucleus. Transcriptional activity at macrophage-specific genes is inhibited by interaction with GFI1, which results in the inhibition of SPI1-induced macrophage differentiation of myeloid progenitor cells, but not that of the granulocyte lineage. Functionally, pioneer transcription factor, which controls hematopoietic cell fate by decompacting stem cell heterochromatin and allowing other transcription factors to enter otherwise inaccessible genomic sites. Once in open chromatin, can directly control gene expression by binding genetic regulatory elements and can also more broadly influence transcription by recruiting transcription factors, such as interferon regulatory factors (IRFs), to otherwise inaccessible genomic regions. Transcriptionally activates genes important for myeloid and lymphoid lineages, such as CSF1R. Transcriptional activation from certain promoters, possibly containing low affinity binding sites, is achieved cooperatively with other transcription factors. FCER1A transactivation is achieved in cooperation with GATA1. May be particularly important for the pro- to pre-B cell transition. Binds (via the ETS domain) onto the purine-rich DNA core sequence 5'-GAGGAA-3', also known as the PU-box. In vitro can bind RNA and interfere with pre-mRNA splicing. The polypeptide is Transcription factor PU.1 (SPI1) (Sus scrofa (Pig)).